The following is a 432-amino-acid chain: 3-oxo-tetronate kinase (432 aa).

ATP is bound by residues histidine 155, serine 272, alanine 324, glycine 344, glutamate 348, 370–373, and glycine 414; that span reads GGET.

This sequence belongs to the four-carbon acid sugar kinase family.

The catalysed reaction is 3-dehydro-L-erythronate + ATP = 3-dehydro-4-O-phospho-L-erythronate + ADP + H(+). It carries out the reaction 3-dehydro-D-erythronate + ATP = 3-dehydro-4-O-phospho-D-erythronate + ADP + H(+). Functionally, catalyzes the ATP-dependent phosphorylation of 3-oxo-tetronate to 3-oxo-tetronate 4-phosphate. The polypeptide is 3-oxo-tetronate kinase (Cupriavidus necator (strain ATCC 17699 / DSM 428 / KCTC 22496 / NCIMB 10442 / H16 / Stanier 337) (Ralstonia eutropha)).